The following is a 213-amino-acid chain: Holliday junction resolvase RecU (213 aa).

Residues Thr99, Asp101, Glu114, and Gln133 each contribute to the Mg(2+) site.

This sequence belongs to the RecU family. It depends on Mg(2+) as a cofactor.

It is found in the cytoplasm. It catalyses the reaction Endonucleolytic cleavage at a junction such as a reciprocal single-stranded crossover between two homologous DNA duplexes (Holliday junction).. Functionally, endonuclease that resolves Holliday junction intermediates in genetic recombination. Cleaves mobile four-strand junctions by introducing symmetrical nicks in paired strands. Promotes annealing of linear ssDNA with homologous dsDNA. Required for DNA repair, homologous recombination and chromosome segregation. This chain is Holliday junction resolvase RecU, found in Lactococcus lactis subsp. cremoris (strain MG1363).